The sequence spans 310 residues: Very-long-chain enoyl-CoA reductase (310 aa).

Over 1-85 (MPITIKSRSK…KDLGPQISWR (85 aa)) the chain is Cytoplasmic. The chain crosses the membrane as a helical span at residues 86–106 (LVFFCEYLGPVLVHSLFYYLS). The Lumenal portion of the chain corresponds to 107–141 (TIPTVVDRWHSASSDYNPFLNRVAYFLILGHYGKR). A helical transmembrane segment spans residues 142 to 162 (LFETLFVHQFSLATMPIFNLF). Over 163 to 165 (KNC) the chain is Cytoplasmic. Residues 166–186 (FHYWVLSGLISFGYFGYGFPF) form a helical membrane-spanning segment. The Lumenal portion of the chain corresponds to 187–201 (GNAKLFKYYSYLKLD). A helical membrane pass occupies residues 202–222 (DLSTLIGLFVLSELWNFYCHI). The Cytoplasmic portion of the chain corresponds to 223-242 (KLRLWGDYQKKHGNAKIRVP). A helical transmembrane segment spans residues 243-265 (LNQGIFNLFVAPNYTFEVWSWIW). The Lumenal segment spans residues 266 to 268 (FTF). The helical transmembrane segment at 269 to 291 (VFKFNLFAVLFLTVSTAQMYAWA) threads the bilayer. The Cytoplasmic portion of the chain corresponds to 292-310 (QKKNKKYHTRRAFLIPFVF).

This sequence belongs to the steroid 5-alpha reductase family. Interacts with the fatty acid elongation system components ELO2 and ELO3. Interacts with NVJ1.

The protein resides in the endoplasmic reticulum membrane. It carries out the reaction a very-long-chain 2,3-saturated fatty acyl-CoA + NADP(+) = a very-long-chain (2E)-enoyl-CoA + NADPH + H(+). The catalysed reaction is octadecanoyl-CoA + NADP(+) = (2E)-octadecenoyl-CoA + NADPH + H(+). It catalyses the reaction (2E)-eicosenoyl-CoA + NADPH + H(+) = eicosanoyl-CoA + NADP(+). The enzyme catalyses (2E)-docosenoyl-CoA + NADPH + H(+) = docosanoyl-CoA + NADP(+). It carries out the reaction (2E)-tetracosenoyl-CoA + NADPH + H(+) = tetracosanoyl-CoA + NADP(+). The catalysed reaction is (2E)-hexacosenoyl-CoA + NADPH + H(+) = hexacosanoyl-CoA + NADP(+). Its pathway is lipid metabolism; fatty acid biosynthesis. Functionally, catalyzes the last of the four reactions of the long-chain fatty acids elongation cycle. This endoplasmic reticulum-bound enzymatic process, allows the addition of 2 carbons to the chain of long- and very long-chain fatty acids/VLCFAs per cycle. This enzyme reduces the trans-2,3-enoyl-CoA fatty acid intermediate to an acyl-CoA that can be further elongated by entering a new cycle of elongation. Thereby, it participates in the production of VLCFAs of different chain lengths that are involved in multiple biological processes as precursors of membrane lipids and lipid mediators. VLCFAs serve for instance as precursors for ceramide and sphingolipids. Required for normal biogenesis of piecemeal microautophagy of the nucleus (PMN) bleps and vesicles during nutrient stress. The chain is Very-long-chain enoyl-CoA reductase (TSC13) from Saccharomyces cerevisiae (strain ATCC 204508 / S288c) (Baker's yeast).